We begin with the raw amino-acid sequence, 532 residues long: Putative L-lactate permease (532 aa).

14 helical membrane passes run 23-43, 56-76, 101-121, 129-149, 152-172, 180-200, 213-233, 234-254, 274-294, 346-366, 387-407, 420-440, 462-482, and 508-528; these read ALPS…VHLL, VVSA…AILF, VAQL…ASGF, APIL…ALIM, VPVS…ALKL, IGSI…LLAL, IVFI…IAQV, NYEF…VWAA, AGEV…LIVT, LLYV…IPFF, PFIA…GGEH, ISGS…SFFS, GISV…GNMV, and IIPM…LVPL.

This sequence belongs to the lactate permease family.

It is found in the cell inner membrane. In terms of biological role, may play a role in L-lactate transport. This is Putative L-lactate permease from Haemophilus influenzae (strain ATCC 51907 / DSM 11121 / KW20 / Rd).